We begin with the raw amino-acid sequence, 187 residues long: Elongation factor P (187 aa).

Belongs to the elongation factor P family.

The protein resides in the cytoplasm. It participates in protein biosynthesis; polypeptide chain elongation. Its function is as follows. Involved in peptide bond synthesis. Stimulates efficient translation and peptide-bond synthesis on native or reconstituted 70S ribosomes in vitro. Probably functions indirectly by altering the affinity of the ribosome for aminoacyl-tRNA, thus increasing their reactivity as acceptors for peptidyl transferase. The chain is Elongation factor P from Rhodococcus jostii (strain RHA1).